Reading from the N-terminus, the 298-residue chain is 4-nitrophenylphosphatase (298 aa).

Homodimer. The N-terminus is blocked.

It carries out the reaction 4-nitrophenyl phosphate + H2O = 4-nitrophenol + phosphate + H(+). Activity enhanced by Mg(2+) ion but inhibited by Zn(2+) ion. The sequence is that of 4-nitrophenylphosphatase (pho2) from Schizosaccharomyces pombe (strain 972 / ATCC 24843) (Fission yeast).